Consider the following 398-residue polypeptide: Enoate reductase 1 (398 aa).

Positions 37 and 191 each coordinate FMN. Substrate is bound by residues histidine 191 and asparagine 194. Tyrosine 196 functions as the Proton donor in the catalytic mechanism. Positions 243 and 348 each coordinate FMN. Tyrosine 375 provides a ligand contact to substrate.

It belongs to the NADH:flavin oxidoreductase/NADH oxidase family. As to quaternary structure, homodimer or heterodimer. FMN serves as cofactor.

It catalyses the reaction butanoate + NAD(+) = (2E)-2-butenoate + NADH + H(+). In terms of biological role, enoate reductase with broad substrate specificity for different alpha,beta-unsaturated carbonyl compounds. Prefers NADPH over NADH as cofactor. This chain is Enoate reductase 1 (KYE1), found in Kluyveromyces lactis (strain ATCC 8585 / CBS 2359 / DSM 70799 / NBRC 1267 / NRRL Y-1140 / WM37) (Yeast).